Here is a 288-residue protein sequence, read N- to C-terminus: Thiamine-monophosphate kinase (288 aa).

3 residues coordinate Mg(2+): Asp20, Thr30, and Asp32. Asp39 serves as a coordination point for substrate. Mg(2+) contacts are provided by Asp60 and Asp107. ATP contacts are provided by residues 106 to 107 (GD) and Arg130. Asp188 lines the Mg(2+) pocket. ATP is bound at residue Ser190. Asp191 contributes to the Mg(2+) binding site. Trp286 contacts substrate.

This sequence belongs to the thiamine-monophosphate kinase family.

The enzyme catalyses thiamine phosphate + ATP = thiamine diphosphate + ADP. The protein operates within cofactor biosynthesis; thiamine diphosphate biosynthesis; thiamine diphosphate from thiamine phosphate: step 1/1. In terms of biological role, catalyzes the ATP-dependent phosphorylation of thiamine-monophosphate (TMP) to form thiamine-pyrophosphate (TPP), the active form of vitamin B1. The sequence is that of Thiamine-monophosphate kinase from Halobacterium salinarum (strain ATCC 700922 / JCM 11081 / NRC-1) (Halobacterium halobium).